The following is a 512-amino-acid chain: Serine--tRNA ligase, cytoplasmic (512 aa).

Methionine 1 carries the post-translational modification N-acetylmethionine. Residues 9–61 are interaction with tRNA; that stretch reads RVDKGGDPALIRETQEKRFKDPGLVDQLVKADSEWRRCRFRADNLNKLKNLCS. Serine 241 carries the post-translational modification Phosphoserine. The L-serine site is built by threonine 271 and arginine 302. ATP-binding positions include 302–304 and 318–321; these read RQE and VHQF. Lysine 323 carries the post-translational modification N6-acetyllysine. An L-serine-binding site is contributed by glutamate 325. 391-394 contributes to the ATP binding site; sequence ELVS. L-serine is bound at residue asparagine 427. A disordered region spans residues 472 to 512; it reads KPAPIDQEPSKKQKKQHEGSKKKAKEVTLENQLQNMEVTEA. Over residues 479-499 the composition is skewed to basic and acidic residues; the sequence is EPSKKQKKQHEGSKKKAKEVT. A Nuclear localization signal motif is present at residues 482-494; sequence KKQKKQHEGSKKK. Residues 500–512 show a composition bias toward polar residues; sequence LENQLQNMEVTEA.

This sequence belongs to the class-II aminoacyl-tRNA synthetase family. Type-1 seryl-tRNA synthetase subfamily. As to quaternary structure, homodimer. The tRNA molecule may bind across the dimer. Interacts with SIRT2. Interacts with METTL6; interaction is required for the tRNA N(3)-methylcytidine methyltransferase activity of METTL6.

The protein resides in the cytoplasm. Its subcellular location is the nucleus. The enzyme catalyses tRNA(Ser) + L-serine + ATP = L-seryl-tRNA(Ser) + AMP + diphosphate + H(+). The catalysed reaction is tRNA(Sec) + L-serine + ATP = L-seryl-tRNA(Sec) + AMP + diphosphate + H(+). It participates in aminoacyl-tRNA biosynthesis; selenocysteinyl-tRNA(Sec) biosynthesis; L-seryl-tRNA(Sec) from L-serine and tRNA(Sec): step 1/1. Its function is as follows. Catalyzes the attachment of serine to tRNA(Ser) in a two-step reaction: serine is first activated by ATP to form Ser-AMP and then transferred to the acceptor end of tRNA(Ser). Is probably also able to aminoacylate tRNA(Sec) with serine, to form the misacylated tRNA L-seryl-tRNA(Sec), which will be further converted into selenocysteinyl-tRNA(Sec). In the nucleus, binds to the VEGFA core promoter and prevents MYC binding and transcriptional activation by MYC. Recruits SIRT2 to the VEGFA promoter, promoting deacetylation of histone H4 at 'Lys-16' (H4K16). Thereby, inhibits the production of VEGFA and sprouting angiogenesis mediated by VEGFA. In Rattus norvegicus (Rat), this protein is Serine--tRNA ligase, cytoplasmic (Sars1).